A 155-amino-acid chain; its full sequence is Small ribosomal subunit protein uS7 (155 aa).

Belongs to the universal ribosomal protein uS7 family. As to quaternary structure, part of the 30S ribosomal subunit. Contacts proteins S9 and S11.

Functionally, one of the primary rRNA binding proteins, it binds directly to 16S rRNA where it nucleates assembly of the head domain of the 30S subunit. Is located at the subunit interface close to the decoding center, probably blocks exit of the E-site tRNA. This is Small ribosomal subunit protein uS7 from Helicobacter acinonychis (strain Sheeba).